Here is a 570-residue protein sequence, read N- to C-terminus: 4-hydroxy-7-methoxy-3-oxo-3,4-dihydro-2H-1,4-benzoxazin-2-yl glucoside beta-D-glucosidase 1c, chloroplastic (570 aa).

A chloroplast-targeting transit peptide spans 1–50; it reads MALLAAATLNPTTHLSIRSRAGHNSENLWLRSAASSQKSKGRFCNLTVRA. A beta-D-glucoside-binding positions include Gln92, His194, and 239–240; that span reads NE. The active-site Proton donor is Glu240. The cysteines at positions 259 and 265 are disulfide-linked. Residues Tyr383, Glu456, Trp504, 511-512, and Phe520 each bind a beta-D-glucoside; that span reads EW. The Nucleophile role is filled by Glu456.

The protein belongs to the glycosyl hydrolase 1 family. In terms of assembly, homo- and heterohexamers. Expressed in young seedlings early after germination.

Its subcellular location is the plastid. The protein resides in the chloroplast. It carries out the reaction Hydrolysis of terminal, non-reducing beta-D-glucosyl residues with release of beta-D-glucose.. The enzyme catalyses DIMBOA beta-D-glucoside + H2O = DIMBOA + D-glucose. The catalysed reaction is DIBOA beta-D-glucoside + H2O = DIBOA + D-glucose. Acts in defense of young plant parts against pests via the production of hydroxamic acids from hydroxamic acid glucosides. Enzymatic activity is highly correlated with plant growth. The preferred substrate is DIMBOA-beta-D-glucoside. This is 4-hydroxy-7-methoxy-3-oxo-3,4-dihydro-2H-1,4-benzoxazin-2-yl glucoside beta-D-glucosidase 1c, chloroplastic (GLU1C) from Triticum aestivum (Wheat).